The primary structure comprises 499 residues: Endosomal/lysosomal proton channel TMEM175 (499 aa).

Over 1–30 (MSRLQTEEQAVDSEGDSSLHRRNEEGTQSS) the chain is Cytoplasmic. Positions 1-30 (MSRLQTEEQAVDSEGDSSLHRRNEEGTQSS) are disordered. Thr6 carries the post-translational modification Phosphothreonine. The helical transmembrane segment at 31–53 (HRMLGFSDALLSIIATVMILPVT) threads the bilayer. Residues 32–38 (RMLGFSD) carry the RxxxFSD motif 1 motif. Topologically, residues 54 to 74 (HTEISPEQQFDKSIQKLLATR) are lumenal. The short helix H1-1 stretch occupies residues 55–60 (TEISPE). The short helix H2-1 stretch occupies residues 62–68 (QFDKSIQ). The helical transmembrane segment at 75–97 (IAVYLMTFLIVTVAWTAHTRLFQ) threads the bilayer. The Cytoplasmic portion of the chain corresponds to 98–103 (VVGKID). Residues 104–125 (DTLALLNLACMMTITLLPYTFS) traverse the membrane as a helical segment. The Lumenal segment spans residues 126–135 (LMVTFPDVPL). Residues 136-157 (GIFLFCVCVIAIGSVQAMIVGY) form a helical membrane-spanning segment. The Cytoplasmic segment spans residues 158 to 181 (AFHFPHLLNPQIQCSTHRDLSRRH). Residues 182–202 (ILHLVLRGPALCFVAAVFSLF) form a helical membrane-spanning segment. At 203 to 207 (FFPLS) the chain is on the lumenal side. A helical transmembrane segment spans residues 208 to 227 (YLLMVTVIFLPHISKATTWC). At 228-254 (KDKLMGQRESPAHDMEPFSIDLHAPLS) the chain is on the cytoplasmic side. A helical membrane pass occupies residues 255–279 (KERVEAFSDGVYAIVATLLILDICE). The RxxxFSD motif 2 signature appears at 257 to 263 (RVEAFSD). The Lumenal portion of the chain corresponds to 280 to 306 (DNVPDPKDVQEKFSGSLVAALGAYGPQ). The interval 285 to 293 (PKDVQEKFS) is short helix H1-2. Residues 295–301 (SLVAALG) form a short helix H2-2 region. Residues 307 to 329 (FLAYFGSFATVGLLWFAHHSLFL) form a helical membrane-spanning segment. The Cytoplasmic portion of the chain corresponds to 330 to 335 (HVRKAT). Residues 336–357 (QTMGLLNILSLAFVGGLPLAYQ) form a helical membrane-spanning segment. Residues 358-372 (QTSAFARQPHDELER) lie on the Lumenal side of the membrane. A helical membrane pass occupies residues 373–393 (VRVSCAIIFFASIFQFAIWTT). The Cytoplasmic segment spans residues 394–413 (ALLHQTETLQPAVQFGGQEH). Residues 414–437 (AFMFAKLALYPCASLLAFAATCLL) form a helical membrane-spanning segment. Residues 438-439 (SR) are Lumenal-facing. Residues 440-466 (FSTAIFHLMQISVPFAFLLLRLLVRLA) form a helical membrane-spanning segment. The Cytoplasmic portion of the chain corresponds to 467–499 (LAGLQVLRGLWPHHPQQDQSEPEAQSQLLPDPC).

The protein belongs to the TMEM175 family. In terms of assembly, homodimer. Interacts with AKT (AKT1, AKT2 or AKT3); leading to formation of the lysoK(GF) complex, which activates the channel. Interacts with LAMP1; inhibiting the proton channel activity of TMEM175. Interacts with LAMP2; inhibiting the proton channel activity of TMEM175.

The protein localises to the endosome membrane. It localises to the lysosome membrane. The enzyme catalyses H(+)(in) = H(+)(out). It carries out the reaction K(+)(in) = K(+)(out). With respect to regulation, active at low pH (under pH 4.6): proton channel activity is activated by luminal side protons. Polyunsaturated fatty acids, such as arachidonic acid, also activate the channel activity. Proton channel activity is directly inhibited by LAMP1 or LAMP2, facilitating lysosomal acidification. Channel activity is activated following interaction with AKT (AKT1, AKT2 or AKT3): interaction promotes activation from closed to an open state. Activation by AKT is independent of AKT serine/threonine-protein kinase activity. Functionally, proton-activated proton channel that catalyzes proton efflux from endosomes and lysosomes to maintain a steady-state pH. Activated at low pH (under pH 4.6) by luminal side protons: selectively mediates lysosomal proton release from lysosomes, eliciting a proton leak that balances V-ATPase activity to maintain pH homeostasis. Regulation of lumenal pH stability is required for autophagosome-lysosome fusion. Also acts as a potassium channel at higher pH, regulating potassium conductance in endosomes and lysosomes. Constitutes the pore-forming subunit of the lysoK(GF) complex, a complex activated by extracellular growth factors. The lysoK(GF) complex is composed of TMEM175 and AKT (AKT1, AKT2 or AKT3), a major target of growth factor receptors: in the complex, TMEM175 channel is opened by conformational changes by AKT, leading to its activation. The lysoK(GF) complex is required to protect neurons against stress-induced damage. The polypeptide is Endosomal/lysosomal proton channel TMEM175 (Mus musculus (Mouse)).